An 835-amino-acid chain; its full sequence is Disease resistance protein RPP13 (835 aa).

A coiled-coil region spans residues 25 to 41 (MAVKEDLEELKTELTCI). The NB-ARC domain maps to 144–453 (SSLRVRQLRR…AEGFIQGDEE (310 aa)). ATP is bound at residue 192-199 (GMGGLGKT).

Belongs to the disease resistance NB-LRR family. RPP13 subfamily.

Functionally, disease resistance protein. Resistance proteins guard the plant against pathogens that contain an appropriate avirulence protein via an indirect interaction with this avirulence protein. That triggers a defense system including the hypersensitive response, which restricts the pathogen growth. In contrast to other resistance proteins, it works independently of ESD1 and NSD1 proteins and does not require the accumulation of salicylic acid, suggesting the existence of an independent signaling pathway. The specificity to avirulence proteins differs in the different cultivars. In Arabidopsis thaliana (Mouse-ear cress), this protein is Disease resistance protein RPP13 (RPP13).